We begin with the raw amino-acid sequence, 338 residues long: UDP-3-O-acylglucosamine N-acyltransferase (338 aa).

Histidine 239 serves as the catalytic Proton acceptor.

This sequence belongs to the transferase hexapeptide repeat family. LpxD subfamily. In terms of assembly, homotrimer.

The catalysed reaction is a UDP-3-O-[(3R)-3-hydroxyacyl]-alpha-D-glucosamine + a (3R)-hydroxyacyl-[ACP] = a UDP-2-N,3-O-bis[(3R)-3-hydroxyacyl]-alpha-D-glucosamine + holo-[ACP] + H(+). It functions in the pathway bacterial outer membrane biogenesis; LPS lipid A biosynthesis. In terms of biological role, catalyzes the N-acylation of UDP-3-O-acylglucosamine using 3-hydroxyacyl-ACP as the acyl donor. Is involved in the biosynthesis of lipid A, a phosphorylated glycolipid that anchors the lipopolysaccharide to the outer membrane of the cell. This Thermosynechococcus vestitus (strain NIES-2133 / IAM M-273 / BP-1) protein is UDP-3-O-acylglucosamine N-acyltransferase.